We begin with the raw amino-acid sequence, 1190 residues long: Serine/threonine-protein kinase N (1190 aa).

REM-1 domains are found at residues 28–102 (NLPE…QILL), 142–219 (ALEG…NREQ), and 242–322 (SSQP…ELPA). Residues 359–515 (LGGKPYQSVS…MALQLEPQGL (157 aa)) form the C2 domain. The span at 395–404 (PGRSRRDKDN) shows a compositional bias: basic and acidic residues. Disordered stretches follow at residues 395–415 (PGRSRRDKDNNSSPGDLRSFV), 572–715 (HVHM…PPPP), 757–787 (PATPTIYGNSAAAGAPQFPQPAQRQEKQPPQ), and 811–832 (SPSSSTTSNSNQQQQQQRRNVA). 2 stretches are compositionally biased toward low complexity: residues 576 to 588 (GSAGSGSSLTGSS) and 767 to 787 (AAAGAPQFPQPAQRQEKQPPQ). A Protein kinase domain is found at 863–1122 (FRLLSVLGRG…AEDVKKQAFF (260 aa)). ATP contacts are provided by residues 869 to 877 (LGRGHFGKV) and K892. D988 acts as the Proton acceptor in catalysis. Residues 1123-1190 (RSIVWDDLLL…QDFSYTAEWC (68 aa)) form the AGC-kinase C-terminal domain.

Belongs to the protein kinase superfamily. Ser/Thr protein kinase family. Interacts (via N-terminus) with Rho1 (via REM repeats), Rac1 (via REM 1 repeat) and Rac2. In terms of processing, phosphorylated. Autophosphorylated; autophosphorylation is stimulated by GTP-bound Rho/Rac GTPases.

It is found in the cytoplasm. The protein localises to the nucleus. The protein resides in the membrane. It localises to the cell projection. Its subcellular location is the lamellipodium. It is found in the cytoskeleton. The protein localises to the cleavage furrow. The protein resides in the midbody. It localises to the cell junction. The catalysed reaction is L-seryl-[protein] + ATP = O-phospho-L-seryl-[protein] + ADP + H(+). It catalyses the reaction L-threonyl-[protein] + ATP = O-phospho-L-threonyl-[protein] + ADP + H(+). Its activity is regulated as follows. Activated by lipids, particularly cardiolipin and to a lesser extent by other acidic phospholipids and unsaturated fatty acids. Two specific sites, Thr-1022 (activation loop of the kinase domain) and Thr-1164 (turn motif), may be needed to be phosphorylated for its full activation. Kinase activity is activated upon binding to GTP-bound Rho/Rac GTPases. Functionally, pkc-related serine/threonine-protein kinase and Rho/Rac effector protein that participates in specific signal transduction responses in the cell. May play a role in the regulation of cell cycle progression, actin cytoskeleton assembly, cell migration, cell adhesion and transcription activation signaling processes. Plays a role in regulating Rho-mediated dorsal closure during embryogenesis. The polypeptide is Serine/threonine-protein kinase N (Pkn) (Drosophila melanogaster (Fruit fly)).